Consider the following 954-residue polypeptide: Valine--tRNA ligase (954 aa).

A 'HIGH' region motif is present at residues 48 to 58 (PNVTGSLHMGH). A 'KMSKS' region motif is present at residues 560–564 (KMSKS). K563 is an ATP binding site. A coiled-coil region spans residues 883–953 (AGFINKEAEL…IQEQYKAIEA (71 aa)).

It belongs to the class-I aminoacyl-tRNA synthetase family. ValS type 1 subfamily. In terms of assembly, monomer.

The protein localises to the cytoplasm. The catalysed reaction is tRNA(Val) + L-valine + ATP = L-valyl-tRNA(Val) + AMP + diphosphate. Catalyzes the attachment of valine to tRNA(Val). As ValRS can inadvertently accommodate and process structurally similar amino acids such as threonine, to avoid such errors, it has a 'posttransfer' editing activity that hydrolyzes mischarged Thr-tRNA(Val) in a tRNA-dependent manner. This Haemophilus influenzae (strain 86-028NP) protein is Valine--tRNA ligase.